Consider the following 220-residue polypeptide: Small ribosomal subunit protein uS3 (220 aa).

The region spanning 38–106 (IRNFINKKLQ…QVHINIVEIK (69 aa)) is the KH type-2 domain.

This sequence belongs to the universal ribosomal protein uS3 family. As to quaternary structure, part of the 30S ribosomal subunit. Forms a tight complex with proteins S10 and S14.

In terms of biological role, binds the lower part of the 30S subunit head. Binds mRNA in the 70S ribosome, positioning it for translation. The protein is Small ribosomal subunit protein uS3 of Lacticaseibacillus paracasei (strain ATCC 334 / BCRC 17002 / CCUG 31169 / CIP 107868 / KCTC 3260 / NRRL B-441) (Lactobacillus paracasei).